The following is a 184-amino-acid chain: Ribosome-recycling factor (184 aa).

This sequence belongs to the RRF family.

Its subcellular location is the cytoplasm. Responsible for the release of ribosomes from messenger RNA at the termination of protein biosynthesis. May increase the efficiency of translation by recycling ribosomes from one round of translation to another. The protein is Ribosome-recycling factor of Borrelia turicatae (strain 91E135).